Consider the following 1343-residue polypeptide: ABC multidrug transporter atrD (1343 aa).

Over residues 1 to 10 (MSPLETNPLS) the composition is skewed to polar residues. Residues 1–67 (MSPLETNPLS…HRPKSSSSNN (67 aa)) form a disordered region. Residues 20–31 (ETSTTEEQASTP) show a composition bias toward low complexity. Asn99 carries an N-linked (GlcNAc...) asparagine glycan. 4 consecutive transmembrane segments (helical) span residues 114 to 134 (ILIMVISTICAIAAGAALPLF), 163 to 183 (YFVYLGIGEFVTVYVSTVGFI), 235 to 255 (KVGLTLTALATFVTAFIIAYV), and 263 to 283 (ICSSTIVALVLTMGGGSQFII). Positions 115-403 (LIMVISTICA…VSPNAQAFTN (289 aa)) constitute an ABC transmembrane type-1 1 domain. An N-linked (GlcNAc...) asparagine glycan is attached at Asn309. A run of 2 helical transmembrane segments spans residues 339–359 (IVMGFMIGAMFGLMYSNYGLG) and 366–386 (FLVDGAVDVGDILTVLMAILI). Positions 438–683 (IELRNVKHIY…GGAYRKLVEA (246 aa)) constitute an ABC transporter 1 domain. ATP is bound at residue 473–480 (GPSGSGKS). Asn545 carries an N-linked (GlcNAc...) asparagine glycan. The next 2 helical transmembrane spans lie at 773–793 (MLIGLVFSVLAGGGQPTQAVL) and 820–840 (LMFFVVGIIQFITQSTNGAAF). Positions 774-1063 (LIGLVFSVLA…VFSFAPDMGK (290 aa)) constitute an ABC transmembrane type-1 2 domain. A glycan (N-linked (GlcNAc...) asparagine) is linked at Asn872. Transmembrane regions (helical) follow at residues 887-907 (HLSGVSGVTLGTILMTSTTLG), 920-942 (LALVCISVVPVLLACGFYRFYML), 1010-1030 (ALVFFCVALGFWYGGTLLGHH), and 1037-1057 (FFVCFSEILFGAQSAGTVFSF). Asn1083 carries N-linked (GlcNAc...) asparagine glycosylation. Positions 1098 to 1336 (IEFRNVHFRY…KGRYYELVNL (239 aa)) constitute an ABC transporter 2 domain. 1133–1140 (GPSGCGKS) contributes to the ATP binding site.

This sequence belongs to the ABC transporter superfamily. ABCB family. Multidrug resistance exporter (TC 3.A.1.201) subfamily.

The protein localises to the cell membrane. Its activity is regulated as follows. Fenamirol efflux transporter activity is inhibited by the cyclosporin derivative PSC 833, nigericin, reserpine and valinomycin. The effect of reserpine is transiant, while that of the cyclosporin derivative PSC 833, nigericin and valinomycin is proportional to the time of exposure. Cyclohexinmide has inhibitory effect only when applied prior to addition of the fungicide. Functionally, pleiotropic ABC efflux transporter involved in the protection of the cells against a wide range of toxic compounds. Confers resistance to the azole fenarimol via efflux transport. May also be involved in the secretion of penicillin. This Emericella nidulans (strain FGSC A4 / ATCC 38163 / CBS 112.46 / NRRL 194 / M139) (Aspergillus nidulans) protein is ABC multidrug transporter atrD.